The sequence spans 418 residues: Lysophosphatidic acid phosphatase type 6 (418 aa).

A mitochondrion-targeting transit peptide spans 1-25; the sequence is MRVWVPVGVLTSLAYCFHQRRVALA. The segment at 51–161 is substrate binding; that stretch reads RHGARSPLKP…VFIRSTNMFR (111 aa). His52 (nucleophile) is an active-site residue. Asp327 acts as the Proton donor in catalysis.

Belongs to the histidine acid phosphatase family. In terms of assembly, monomer.

It localises to the mitochondrion. It catalyses the reaction a phosphate monoester + H2O = an alcohol + phosphate. It carries out the reaction 1-(9Z-octadecenoyl)-sn-glycero-3-phosphate + H2O = 1-(9Z-octadecenoyl)-sn-glycerol + phosphate. Hydrolyzes lysophosphatidic acid (LPA) containing a medium length fatty acid chain to the corresponding monoacylglycerol. Has highest activity with lysophosphatidic acid containing myristate (C14:0), monounsaturated oleate (C18:1) or palmitate (C16:0), and lower activity with C18:0 and C6:0 lysophosphatidic acid. This Mus musculus (Mouse) protein is Lysophosphatidic acid phosphatase type 6 (Acp6).